Consider the following 956-residue polypeptide: Glutamate receptor ionotropic, kainate 4 (956 aa).

The N-terminal stretch at 1 to 20 is a signal peptide; sequence MPRVSAPLVLLPAWLLMVAC. Over 21–545 the chain is Extracellular; that stretch reads SPHSLRIAAI…YFSSLDPFSP (525 aa). Asparagine 158, asparagine 220, asparagine 272, asparagine 286, asparagine 323, asparagine 408, asparagine 415, and asparagine 479 each carry an N-linked (GlcNAc...) asparagine glycan. 3 residues coordinate L-glutamate: glycine 500, threonine 502, and arginine 507. The helical transmembrane segment at 546-566 threads the bilayer; sequence GVWLFMLLAYLAVSCVLFLVA. At 567–623 the chain is on the cytoplasmic side; sequence RLTPYEWYSPHPCAQGRCNLLVNQYSLGNSLWFPVGGFMQQGSTIAPRALSTRCVSG. A helical transmembrane segment spans residues 624-644; sequence VWWAFTLIIISSYTANLAAFL. At 645–804 the chain is on the extracellular side; the sequence is TVQRMEVPIE…HRAKGLGMEN (160 aa). Residues serine 674, serine 675, and glutamate 723 each contribute to the L-glutamate site. The N-linked (GlcNAc...) asparagine glycan is linked to asparagine 736. A helical transmembrane segment spans residues 805-825; it reads IGGIFVVLICGLIVAIFMAML. The Cytoplasmic segment spans residues 826–956; it reads EFLWTLRHSE…DKTTNSSEPE (131 aa). The tract at residues 931-956 is disordered; the sequence is LRARPSPARSEESLEWDKTTNSSEPE. Residues 939–948 show a composition bias toward basic and acidic residues; it reads RSEESLEWDK.

The protein belongs to the glutamate-gated ion channel (TC 1.A.10.1) family. GRIK4 subfamily. Homodimer. Can form functional heteromeric receptors with GRIK1, GRIK2 and GRIK3. In terms of tissue distribution, strong expression in hippocampal CA3 pyramidal cells. Low expression in hippocampal dentate granule cells, in layers II, V and VI of the cortex, and in cerebellar Purkinje cells. No expression in the striatum, reticular thalamus, hypothalamus or amygdaloid complex.

It is found in the cell membrane. It localises to the postsynaptic cell membrane. Its subcellular location is the presynaptic cell membrane. Functionally, ionotropic glutamate receptor that functions as a cation-permeable ligand-gated ion channel, gated by L-glutamate and the glutamatergic agonist kainic acid. Cannot form functional channels on its own and shows channel activity only in heteromeric assembly with GRIK1, GRIK2 and GRIK3 subunits. This Rattus norvegicus (Rat) protein is Glutamate receptor ionotropic, kainate 4 (Grik4).